We begin with the raw amino-acid sequence, 59 residues long: Large ribosomal subunit protein uL30 (59 aa).

The protein belongs to the universal ribosomal protein uL30 family. In terms of assembly, part of the 50S ribosomal subunit.

The polypeptide is Large ribosomal subunit protein uL30 (Geobacter sulfurreducens (strain ATCC 51573 / DSM 12127 / PCA)).